Here is a 474-residue protein sequence, read N- to C-terminus: Serine/threonine-protein kinase VRK3 (474 aa).

Positions His-41 to Thr-58 are enriched in polar residues. The interval His-41 to Leu-152 is disordered. A Nuclear localization signal motif is present at residues Lys-49–Lys-64. Residues Ser-54, Ser-55, Ser-59, Ser-82, Ser-83, and Ser-90 each carry the phosphoserine modification. The span at Thr-88–Arg-101 shows a compositional bias: low complexity. Positions Ser-107–Leu-149 are enriched in polar residues. Ser-108 carries the phosphoserine; by CDK5 modification. A phosphoserine mark is found at Ser-115 and Ser-122. A Protein kinase domain is found at Trp-166–Leu-457.

The protein belongs to the protein kinase superfamily. CK1 Ser/Thr protein kinase family. VRK subfamily. Interacts with DUSP3. Interacts with RAN. Interacts with HSP70/HSPA1A. Phosphorylated at Ser-108 by CDK5; leading to protection of the cell against H2O2-induced apoptosis. Post-translationally, ubiquitinated by RNF144A.

The protein localises to the nucleus. It localises to the cytoplasm. It catalyses the reaction L-seryl-[protein] + ATP = O-phospho-L-seryl-[protein] + ADP + H(+). Plays a role in the regulation of the cell cycle by phosphorylating the nuclear envelope protein barrier-to-autointegration factor/BAF that is required for disassembly and reassembly, respectively, of the nuclear envelope during mitosis. Under normal physiological conditions, negatively regulates ERK activity along with VHR/DUSP3 phosphatase in the nucleus, causing timely and transient action of ERK. Stress conditions activate CDK5 which phosphorylates VRK3 to increase VHR phosphatase activity and suppress prolonged ERK activation that causes cell death. For example, upon glutamate induction, promotes nuclear localization of HSP70/HSPA1A to inhibit ERK activation via VHR/DUSP3 phosphatase. In Homo sapiens (Human), this protein is Serine/threonine-protein kinase VRK3 (VRK3).